Reading from the N-terminus, the 550-residue chain is Cyclopentanone 1,2-monooxygenase (550 aa).

FAD contacts are provided by residues 31–32 (FT), D51, W60, D71, Y77, and V123.

It belongs to the FAD-binding monooxygenase family. As to quaternary structure, homotetramer. FAD is required as a cofactor.

It carries out the reaction cyclopentanone + NADPH + O2 + H(+) = 5-valerolactone + NADP(+) + H2O. It functions in the pathway alcohol metabolism; cyclopentanol degradation; 5-valerolactone from cyclopentanol: step 2/2. Its function is as follows. Catalyzes a Baeyer-Villiger oxidation reaction, i.e. the insertion of an oxygen atom into a carbon-carbon bond adjacent to a carbonyl, which converts ketones to esters or lactones using NADPH as an electron donor. Converts cyclopentanone to 5-valerolactone, a step in the degradation pathway of cyclopentanol. Besides cycloalkanones, can also act on methylated and other alkylated cycloalkanones, and on methylated cycloalkenones, with high enantioselectivity in some cases. Cannot use NADH instead of NADPH. This Comamonas sp. (strain NCIMB 9872) protein is Cyclopentanone 1,2-monooxygenase (cpnB).